A 1412-amino-acid polypeptide reads, in one-letter code: Erbin (1412 aa).

LRR repeat units lie at residues Thr23–Phe44, Thr47–Cys68, Ser70–Leu91, Asn93–Cys114, Val116–Leu137, Asn139–Thr161, Lys162–Leu183, Gln185–Leu206, Gly208–Leu229, Gln231–Cys252, Asn254–Leu275, Asn277–Leu298, Ser300–Leu321, Asn323–Trp344, Asn346–Met367, Lys369–Gln391, and Gln392–Thr413. Phosphoserine is present on residues Ser440 and Ser444. Disordered stretches follow at residues Cys464–Asp489 and Lys506–Val542. The span at Glu470–Leu480 shows a compositional bias: basic and acidic residues. Tyr483 bears the Phosphotyrosine mark. Thr485 bears the Phosphothreonine mark. Over residues Lys506–Gly532 the composition is skewed to basic and acidic residues. The segment covering Val533–Val542 has biased composition (low complexity). Phosphoserine is present on residues Ser569, Ser598, Ser602, Ser603, and Ser620. The tract at residues Pro615–Cys681 is disordered. Basic and acidic residues predominate over residues Asn632–Asp641. The segment covering Asn650–Ser662 has biased composition (low complexity). The segment covering Arg663 to Cys681 has biased composition (polar residues). Ser715 bears the Phosphoserine mark. Positions Glu803–Val867 are disordered. Over residues Glu817–Arg835 the composition is skewed to polar residues. Phosphoserine is present on residues Ser852, Ser857, and Ser872. Position 917 is a phosphothreonine (Thr917). Phosphotyrosine is present on Tyr920. Ser931 is modified (phosphoserine). Tyr972 is modified (phosphotyrosine). Disordered stretches follow at residues Asn997 to Tyr1021 and Gln1075 to Val1192. A compositionally biased stretch (polar residues) spans Gln1075–Val1086. Phosphotyrosine is present on Tyr1104. Residues Met1157 to Lys1171 show a composition bias toward polar residues. Ser1158, Ser1179, and Ser1286 each carry phosphoserine. The PDZ domain maps to Glu1321–Val1410.

The protein belongs to the LAP (LRR and PDZ) protein family. As to quaternary structure, interacts with ERBB2, BPAG1 and ITGB4. May favor the localization of ERBB2, by restricting its presence to the basolateral membrane of epithelial cells. Also found to interact with ARVCF and delta catenin. Interacts (via C-terminus) with DST Isoform 3 (via N-terminus). Interacts with NOD2 (via CARD domain). Highly expressed in brain, heart, kidney, muscle and stomach, followed by liver, spleen and intestine.

The protein localises to the cell junction. Its subcellular location is the hemidesmosome. The protein resides in the nucleus membrane. It localises to the basolateral cell membrane. In terms of biological role, acts as an adapter for the receptor ERBB2, in epithelia. By binding the unphosphorylated 'Tyr-1248' of receptor ERBB2, it may contribute to stabilize this unphosphorylated state. Inhibits NOD2-dependent NF-kappa-B signaling and pro-inflammatory cytokine secretion. The chain is Erbin from Homo sapiens (Human).